A 51-amino-acid polypeptide reads, in one-letter code: Putative ribosomal protein eL39-like 5 (51 aa).

The protein belongs to the eukaryotic ribosomal protein eL39 family.

The chain is Putative ribosomal protein eL39-like 5 (RPL39P5) from Homo sapiens (Human).